Consider the following 48-residue polypeptide: Palustrin-3a (48 aa).

Residues C43 and C48 are joined by a disulfide bond.

As to expression, expressed by the skin glands.

The protein localises to the secreted. In terms of biological role, antimicrobial activity against Gram-negative bacterium E.coli. In Lithobates palustris (Pickerel frog), this protein is Palustrin-3a.